Here is a 590-residue protein sequence, read N- to C-terminus: MSAPKFGYVLLLIVLINISNNGVDAFHKVFKKLQSKSTSLESVSPLHRTAYHFQPPRHWINDPNAPMLYKGVYHLFYQYNPKGAVWGNIVWAHSVSKDLINWEALEPAIYPSKWFDINGTWSGSATHVPGKGPVILYTGITENQTQIQNYAIPQDLSDPYLKTWIKPDDNPIVKPDNGENGSAFRDPTTAWFNKKDGYWRMLVGSKRKNRGIAYMYKSRDFKKWVKSKRPIHSRKKTGMWECPDFFPVSVTDKKNGLDFSYDGPNAKHVLKVSLDLTRYEYYTLGTYDTKKDRYRPDGYTPDGWDGLRFDYGNYYASKTFFDDKTNRRILWGWANESDTVQDDTVKGWAGIQLIPRTILLDSSGKQLVFWPIEEIESLRGKNVQMTNQKMEMGQRFEVQGITPAQVDVDVTFNVGNLEKAEKFDESFATKPLELCNLKGSNVNGGVGPFGLITLATSDLEEYTPVFFRVFKDAASNKPKVLMCSDAKPSSLKKDTGTDAKERMYKPSFAGFVDVGLLDGKISLRSLIDHSVVESFGAKGKTVITSRVYPTKAVGEKAHLFVFNNGSQPVTVESLNAWNMQKPLKMNQGAK.

The N-terminal stretch at 1 to 25 (MSAPKFGYVLLLIVLINISNNGVDA) is a signal peptide. Residues 59-62 (WIND), Gln-78, and Trp-86 each bind substrate. Asp-62 is a catalytic residue. The N-linked (GlcNAc...) asparagine glycan is linked to Asn-118. A substrate-binding site is contributed by 121-122 (WS). 2 N-linked (GlcNAc...) asparagine glycosylation sites follow: Asn-143 and Asn-180. Substrate contacts are provided by residues 185–186 (RD), Glu-241, and Asp-275. Residue Asn-335 is glycosylated (N-linked (GlcNAc...) asparagine). Cys-435 and Cys-483 are oxidised to a cystine. N-linked (GlcNAc...) asparagine glycosylation occurs at Asn-564.

The protein belongs to the glycosyl hydrolase 32 family. As to expression, expressed in flowers, and seeds.

The protein resides in the secreted. The protein localises to the extracellular space. It localises to the apoplast. It is found in the cell wall. The catalysed reaction is Hydrolysis of terminal non-reducing beta-D-fructofuranoside residues in beta-D-fructofuranosides.. The chain is Beta-fructofuranosidase, insoluble isoenzyme CWINV2 (CWINV2) from Arabidopsis thaliana (Mouse-ear cress).